The following is a 199-amino-acid chain: FMN-dependent NADH:quinone oxidoreductase 2 (199 aa).

FMN is bound by residues serine 10, 16–18 (SVS), and 96–99 (MYNF).

It belongs to the azoreductase type 1 family. In terms of assembly, homodimer. FMN serves as cofactor.

The enzyme catalyses 2 a quinone + NADH + H(+) = 2 a 1,4-benzosemiquinone + NAD(+). It catalyses the reaction N,N-dimethyl-1,4-phenylenediamine + anthranilate + 2 NAD(+) = 2-(4-dimethylaminophenyl)diazenylbenzoate + 2 NADH + 2 H(+). Quinone reductase that provides resistance to thiol-specific stress caused by electrophilic quinones. Functionally, also exhibits azoreductase activity. Catalyzes the reductive cleavage of the azo bond in aromatic azo compounds to the corresponding amines. The polypeptide is FMN-dependent NADH:quinone oxidoreductase 2 (Pseudomonas fluorescens (strain Pf0-1)).